The chain runs to 366 residues: GTP cyclohydrolase 1 type 2 homolog (366 aa).

His-64, His-65, Asp-102, His-326, and Glu-329 together coordinate a divalent metal cation.

The protein belongs to the GTP cyclohydrolase I type 2/NIF3 family. As to quaternary structure, homohexamer.

The chain is GTP cyclohydrolase 1 type 2 homolog from Staphylococcus epidermidis (strain ATCC 12228 / FDA PCI 1200).